The following is a 725-amino-acid chain: Putative coiled-coil domain-containing protein 144B (725 aa).

Over residues 1 to 11 (MASWGGEKRGG) the composition is skewed to basic and acidic residues. Disordered regions lie at residues 1 to 25 (MASWGGEKRGGAEGSPKLAVYATRK), 87 to 188 (AARS…NLTE), 213 to 260 (LPEN…DCDR), 453 to 485 (NMNQNSDSGSTNNYKSLKPKLENLSSLPPDSDR), and 528 to 586 (EEEM…KVKN). 2 stretches are compositionally biased toward polar residues: residues 129–150 (PESLPQNNNPDWHPTNLTLSDE) and 165–178 (PSVSPSMPENQSAT). A coiled-coil region spans residues 215 to 244 (ENKESKEAEQDLELTSEEEQERLKGCENKQ). The span at 224–234 (QDLELTSEEEQ) shows a compositional bias: acidic residues. Polar residues predominate over residues 453-467 (NMNQNSDSGSTNNYK). Residues 490 to 546 (YLHEELQQDMQKFKNEVNTLEEEFLALKKENVQLHKEVEEEMEKHRSNSTELSGTLT) adopt a coiled-coil conformation. Residues 528–537 (EEEMEKHRSN) show a composition bias toward basic and acidic residues. Residues 543 to 552 (GTLTDGTTVG) show a composition bias toward low complexity. The segment covering 563–583 (PRKENEEHDRPADKTANEKNK) has biased composition (basic and acidic residues). Residues 648 to 713 (LLKLKNNHCD…ALKQENGRKE (66 aa)) adopt a coiled-coil conformation.

It belongs to the CCDC144 family.

This Homo sapiens (Human) protein is Putative coiled-coil domain-containing protein 144B.